We begin with the raw amino-acid sequence, 110 residues long: uncharacterized protein (110 aa).

A disordered region spans residues 38 to 62; the sequence is SVQQNARAEEAEAAAPPAEEDSLPD.

This is an uncharacterized protein from Mus musculus (Mouse).